The sequence spans 104 residues: DNA-directed RNA polymerase subunit omega (104 aa).

Positions 60 to 104 (VIHPDPEGKREAVRRRAEEERLRKEEEERKIKEQIAKEKEEGEKI) are disordered. The span at 63–104 (PDPEGKREAVRRRAEEERLRKEEEERKIKEQIAKEKEEGEKI) shows a compositional bias: basic and acidic residues.

This sequence belongs to the RNA polymerase subunit omega family. In terms of assembly, the RNAP catalytic core consists of 2 alpha, 1 beta, 1 beta' and 1 omega subunit. When a sigma factor is associated with the core the holoenzyme is formed, which can initiate transcription.

The catalysed reaction is RNA(n) + a ribonucleoside 5'-triphosphate = RNA(n+1) + diphosphate. In terms of biological role, promotes RNA polymerase assembly. Latches the N- and C-terminal regions of the beta' subunit thereby facilitating its interaction with the beta and alpha subunits. This is DNA-directed RNA polymerase subunit omega from Streptococcus sanguinis (strain SK36).